A 553-amino-acid polypeptide reads, in one-letter code: Dihydroxy-acid dehydratase (553 aa).

Residue cysteine 49 coordinates [2Fe-2S] cluster. Residue aspartate 81 coordinates Mg(2+). Residue cysteine 122 participates in [2Fe-2S] cluster binding. Positions 123 and 124 each coordinate Mg(2+). Lysine 124 is subject to N6-carboxylysine. Residue cysteine 194 participates in [2Fe-2S] cluster binding. Glutamate 444 provides a ligand contact to Mg(2+). Residue serine 470 is the Proton acceptor of the active site.

The protein belongs to the IlvD/Edd family. Homodimer. [2Fe-2S] cluster serves as cofactor. It depends on Mg(2+) as a cofactor.

It carries out the reaction (2R)-2,3-dihydroxy-3-methylbutanoate = 3-methyl-2-oxobutanoate + H2O. It catalyses the reaction (2R,3R)-2,3-dihydroxy-3-methylpentanoate = (S)-3-methyl-2-oxopentanoate + H2O. It participates in amino-acid biosynthesis; L-isoleucine biosynthesis; L-isoleucine from 2-oxobutanoate: step 3/4. The protein operates within amino-acid biosynthesis; L-valine biosynthesis; L-valine from pyruvate: step 3/4. Functions in the biosynthesis of branched-chain amino acids. Catalyzes the dehydration of (2R,3R)-2,3-dihydroxy-3-methylpentanoate (2,3-dihydroxy-3-methylvalerate) into 2-oxo-3-methylpentanoate (2-oxo-3-methylvalerate) and of (2R)-2,3-dihydroxy-3-methylbutanoate (2,3-dihydroxyisovalerate) into 2-oxo-3-methylbutanoate (2-oxoisovalerate), the penultimate precursor to L-isoleucine and L-valine, respectively. The polypeptide is Dihydroxy-acid dehydratase (Aeropyrum pernix (strain ATCC 700893 / DSM 11879 / JCM 9820 / NBRC 100138 / K1)).